The following is a 405-amino-acid chain: DNA primase DnaG (405 aa).

Residues 172-248 (DSIIVVEGRA…HIDYIARAPP (77 aa)) enclose the Toprim domain. The Mg(2+) site is built by E178, D222, and D224. Positions 279-302 (AAGEKTESQMSPQQPQLTQTQPTT) are disordered. Residues 290–302 (PQQPQLTQTQPTT) are compositionally biased toward low complexity.

The protein belongs to the archaeal DnaG primase family. In terms of assembly, forms a ternary complex with MCM helicase and DNA. Component of the archaeal exosome complex. Requires Mg(2+) as cofactor.

It catalyses the reaction ssDNA + n NTP = ssDNA/pppN(pN)n-1 hybrid + (n-1) diphosphate.. Its function is as follows. RNA polymerase that catalyzes the synthesis of short RNA molecules used as primers for DNA polymerase during DNA replication. Also part of the exosome, which is a complex involved in RNA degradation. Acts as a poly(A)-binding protein that enhances the interaction between heteromeric, adenine-rich transcripts and the exosome. The sequence is that of DNA primase DnaG from Pyrobaculum islandicum (strain DSM 4184 / JCM 9189 / GEO3).